The chain runs to 225 residues: LysM and putative peptidoglycan-binding domain-containing protein 1 (225 aa).

2 positions are modified to phosphoserine: Ser23 and Ser33. One can recognise a LysM domain in the interval 40 to 84 (LEHQLAPGDTLAGLALKYGVTMEQIKRANRLYTNDSIFLKKTLHI). Residues 97–153 (LDSEEEKDGEEAVQPSKDEVRPHSAERKKRERGLGHANGEPLPTAGQEPARHDLSAS) are disordered. The span at 98 to 107 (DSEEEKDGEE) shows a compositional bias: acidic residues. The residue at position 99 (Ser99) is a Phosphoserine. The span at 112–121 (SKDEVRPHSA) shows a compositional bias: basic and acidic residues. Residues Ser164, Ser179, Ser192, and Ser210 each carry the phosphoserine modification. Residues 170–225 (AAQKLKKGESGIPGEDSSLHLSSPRMQQRAVLGPVPLTQTSRTRTLRDQEDEIFKL) are disordered. Positions 214–225 (TLRDQEDEIFKL) are enriched in basic and acidic residues.

The polypeptide is LysM and putative peptidoglycan-binding domain-containing protein 1 (LYSMD1) (Bos taurus (Bovine)).